The chain runs to 169 residues: Large ribosomal subunit protein uL5 (169 aa).

This sequence belongs to the universal ribosomal protein uL5 family. In terms of assembly, part of the 50S ribosomal subunit; contacts the 5S rRNA and probably tRNA. Forms a bridge to the 30S subunit in the 70S ribosome.

Functionally, this is one of the proteins that bind and probably mediate the attachment of the 5S RNA into the large ribosomal subunit, where it forms part of the central protuberance. In the 70S ribosome it contacts protein S13 of the 30S subunit (bridge B1b), connecting the 2 subunits; this bridge is implicated in subunit movement. May contact the P site tRNA; the 5S rRNA and some of its associated proteins might help stabilize positioning of ribosome-bound tRNAs. The protein is Large ribosomal subunit protein uL5 of Methanococcoides burtonii (strain DSM 6242 / NBRC 107633 / OCM 468 / ACE-M).